Here is a 111-residue protein sequence, read N- to C-terminus: MAETILIETKTAGGNCRSYLMAGASYLGILCFVPLLMSRDDEYVYFHAKQGLVLWMWSILAMFALHLPGIGKWLFGFSSMGVLMLSVVGLVSVALRRTWRLPLISHVVALI.

Topologically, residues 1–17 are cytoplasmic; it reads MAETILIETKTAGGNCR. The chain crosses the membrane as a helical span at residues 18-38; sequence SYLMAGASYLGILCFVPLLMS. Residues 39–50 lie on the Lumenal side of the membrane; it reads RDDEYVYFHAKQ. Residues 51–71 traverse the membrane as a helical segment; it reads GLVLWMWSILAMFALHLPGIG. A topological domain (cytoplasmic) is located at residue Lys72. A helical transmembrane segment spans residues 73–93; that stretch reads WLFGFSSMGVLMLSVVGLVSV. The Lumenal portion of the chain corresponds to 94 to 111; that stretch reads ALRRTWRLPLISHVVALI.

The protein belongs to the magnetosome MamF/MmsF protein family. As to quaternary structure, may form homooligomers. Subject to cleavage or degradation; identified by N-terminal sequencing of proteins that are about 103, 92 and 15 kDa in size.

It localises to the magnetosome membrane. Functionally, plays a role in regulating magnetite crystal size; partially redundant function with MmsF. The protein is Magnetosome protein MamF of Magnetospirillum gryphiswaldense (strain DSM 6361 / JCM 21280 / NBRC 15271 / MSR-1).